The chain runs to 288 residues: UDP-3-O-acyl-N-acetylglucosamine deacetylase (288 aa).

The Zn(2+) site is built by H79, H236, and D240. The active-site Proton donor is H263.

This sequence belongs to the LpxC family. Zn(2+) serves as cofactor.

It catalyses the reaction a UDP-3-O-[(3R)-3-hydroxyacyl]-N-acetyl-alpha-D-glucosamine + H2O = a UDP-3-O-[(3R)-3-hydroxyacyl]-alpha-D-glucosamine + acetate. The protein operates within glycolipid biosynthesis; lipid IV(A) biosynthesis; lipid IV(A) from (3R)-3-hydroxytetradecanoyl-[acyl-carrier-protein] and UDP-N-acetyl-alpha-D-glucosamine: step 2/6. In terms of biological role, catalyzes the hydrolysis of UDP-3-O-myristoyl-N-acetylglucosamine to form UDP-3-O-myristoylglucosamine and acetate, the committed step in lipid A biosynthesis. In Rickettsia africae (strain ESF-5), this protein is UDP-3-O-acyl-N-acetylglucosamine deacetylase.